A 117-amino-acid chain; its full sequence is Nitrogen regulatory protein GlnK1 (117 aa).

Residues Thr-32, 40–42 (GAQ), and 92–95 (GSGK) each bind ADP. ATP-binding positions include Thr-32, 40-42 (GAQ), and 92-95 (GSGK).

It belongs to the P(II) protein family. Homotrimer. Interacts and forms stable complexes with the glutamine synthetase GlnA1.

The protein resides in the cytoplasm. Its activity is regulated as follows. Inhibitory effects on GlnA1 are abolished in the presence of the effector 2-oxoglutarate. Involved in the regulation of nitrogen metabolism. Regulates the activity of its targets by protein-protein interaction in response to the nitrogen status of the cell. Allows finetuning control of the glutamine synthetase GlnA1 under changing nitrogen availabilities via direct protein interaction. This chain is Nitrogen regulatory protein GlnK1, found in Methanosarcina mazei (strain ATCC BAA-159 / DSM 3647 / Goe1 / Go1 / JCM 11833 / OCM 88) (Methanosarcina frisia).